The following is a 287-amino-acid chain: Cuticle collagen 38 (287 aa).

Positions 1–19 (MSKYLVPVCASISLVAVFG) are cleaved as a signal peptide. A disordered region spans residues 95-287 (QGCPPGPPGP…CPCPARAKKH (193 aa)). Positions 98–107 (PPGPPGPPGL) are enriched in pro residues. 2 consecutive Collagen-like domains span residues 145–200 (QGPP…GSEG) and 215–273 (GQPG…SIGP). Residues 184–205 (TGEQGPQGEPGTEGSEGPTGQD) show a composition bias toward low complexity. Over residues 206–215 (GTIGGPGLPG) the composition is skewed to gly residues. The span at 238-252 (DGEQGPQGPQGPDGQ) shows a compositional bias: low complexity.

The protein belongs to the cuticular collagen family. As to quaternary structure, collagen polypeptide chains are complexed within the cuticle by disulfide bonds and other types of covalent cross-links.

Its subcellular location is the nucleus. Its function is as follows. Probable cuticular collagen-like protein. Nematode cuticles are composed largely of collagen-like proteins. The cuticle functions both as an exoskeleton and as a barrier to protect the worm from its environment. Acts downstream of the Wnt signaling pathway, perhaps in the formation of the adult cuticle. This is Cuticle collagen 38 from Caenorhabditis elegans.